A 175-amino-acid chain; its full sequence is Peptide deformylase (175 aa).

Fe cation is bound by residues C99 and H141. Residue E142 is part of the active site. H145 contributes to the Fe cation binding site.

Belongs to the polypeptide deformylase family. Fe(2+) is required as a cofactor.

The enzyme catalyses N-terminal N-formyl-L-methionyl-[peptide] + H2O = N-terminal L-methionyl-[peptide] + formate. Removes the formyl group from the N-terminal Met of newly synthesized proteins. Requires at least a dipeptide for an efficient rate of reaction. N-terminal L-methionine is a prerequisite for activity but the enzyme has broad specificity at other positions. The sequence is that of Peptide deformylase from Rickettsia prowazekii (strain Madrid E).